The chain runs to 190 residues: Glutathione peroxidase 2 (190 aa).

Sec40 is a catalytic residue. Residue Sec40 is a non-standard amino acid, selenocysteine.

This sequence belongs to the glutathione peroxidase family. In terms of assembly, homotetramer.

It localises to the cytoplasm. The protein localises to the cytosol. It carries out the reaction 2 glutathione + H2O2 = glutathione disulfide + 2 H2O. The enzyme catalyses a hydroperoxy polyunsaturated fatty acid + 2 glutathione = a hydroxy polyunsaturated fatty acid + glutathione disulfide + H2O. It catalyses the reaction tert-butyl hydroperoxide + 2 glutathione = tert-butanol + glutathione disulfide + H2O. The catalysed reaction is cumene hydroperoxide + 2 glutathione = 2-phenylpropan-2-ol + glutathione disulfide + H2O. It carries out the reaction (13S)-hydroperoxy-(9Z,11E)-octadecadienoate + 2 glutathione = (13S)-hydroxy-(9Z,11E)-octadecadienoate + glutathione disulfide + H2O. The enzyme catalyses (5S)-hydroperoxy-(6E,8Z,11Z,14Z)-eicosatetraenoate + 2 glutathione = (5S)-hydroxy-(6E,8Z,11Z,14Z)-eicosatetraenoate + glutathione disulfide + H2O. It catalyses the reaction (12R)-hydroperoxy-(5Z,8Z,10E,14Z)-eicosatetraenoate + 2 glutathione = (12R)-hydroxy-(5Z,8Z,10E,14Z)-eicosatetraenoate + glutathione disulfide + H2O. The catalysed reaction is (15S)-hydroperoxy-(5Z,8Z,11Z,13E)-eicosatetraenoate + 2 glutathione = (15S)-hydroxy-(5Z,8Z,11Z,13E)-eicosatetraenoate + glutathione disulfide + H2O. Catalyzes the reduction of hydroperoxides in a glutathione-dependent manner thus regulating cellular redox homeostasis. Can reduce small soluble hydroperoxides such as H2O2, cumene hydroperoxide and tert-butyl hydroperoxide, as well as several fatty acid-derived hydroperoxides. Cannot reduce phosphatidycholine hydroperoxide. This is Glutathione peroxidase 2 (Gpx2) from Mus musculus (Mouse).